A 426-amino-acid chain; its full sequence is Putative acid phosphatase 1 (426 aa).

The first 18 residues, 1-18, serve as a signal peptide directing secretion; it reads MRVLFYVSILVIIASVHT. Over 19–388 the chain is Extracellular; it reads QLISVHVIFR…SEWVMTPLSW (370 aa). His29 functions as the Nucleophile in the catalytic mechanism. 2 N-linked (GlcNAc...) asparagine glycosylation sites follow: Asn37 and Asn145. Residues Cys133 and Cys369 are joined by a disulfide bond. Asp276 (proton donor) is an active-site residue. Residues 389-409 form a helical membrane-spanning segment; sequence IIVAIAILLLIALILMTYFVI. Topologically, residues 410-426 are cytoplasmic; sequence RYKNRSIVNIKKLSLEN.

It belongs to the histidine acid phosphatase family.

Its subcellular location is the membrane. It carries out the reaction a phosphate monoester + H2O = an alcohol + phosphate. This Caenorhabditis elegans protein is Putative acid phosphatase 1.